The following is a 768-amino-acid chain: Mitochondrial 15S rRNA processing factor CCM1 (768 aa).

The N-terminal 90 residues, 1 to 90 (MIRLIRWNNV…RSFTKVIAQH (90 aa)), are a transit peptide targeting the mitochondrion. Disordered regions lie at residues 28 to 65 (NKRKRRIPPSKPRSSNRKDGDIEPYRMTDQNQTPNTGS) and 90 to 114 (HLKPEQENDSLTSAEKPDTSQLPPI). Positions 43–53 (NRKDGDIEPYR) are enriched in basic and acidic residues. Positions 55–65 (TDQNQTPNTGS) are enriched in polar residues. PPR repeat units follow at residues 274–308 (KIDHYETMILAYVKNNHMEKIDGILAQMKKKNIEI), 309–344 (SKMIYTSIVRGYIFYQKDHQRALDTFDSMKFLSQKT), 347–381 (DEKVYTDVIVSCVMHREIERALDLYYELKDKGMNV), 382–417 (NQNLLSTLAKGCSRSKQFKTQAWNFLFQVYDHGWVP), and 418–452 (NLQTYEHMLYIAARDGDVELTRVLFYKMLQTNSVT). The span at 583-596 (IEPRQDEPTEKATT) shows a compositional bias: basic and acidic residues. Residues 583–609 (IEPRQDEPTEKATTTEEQNASSETDNN) form a disordered region. Over residues 597-609 (TEEQNASSETDNN) the composition is skewed to polar residues. The stretch at 634–664 (DSYLYNLAIKAAGKFKNYGFAQEILHERGQF) is one PPR 6 repeat.

The protein belongs to the CCM1 family. Binds to mitochondrial small subunit 15S rRNA.

Its subcellular location is the mitochondrion. Regulates mitochondrial small subunit maturation by controlling 15S rRNA 5'-end processing. Localizes to the 5' precursor of the 15S rRNA in a position that is subsequently occupied by mS47 in the mature yeast mtSSU. Uses structure and sequence-specific RNA recognition, binding to a single-stranded region of the precursor and specifically recognizing bases -6 to -1. The exchange of Ccm1 for mS47 is coupled to the irreversible removal of precursor rRNA that is accompanied by conformational changes of the mitoribosomal proteins uS5m and mS26. These conformational changes signal completion of 5'-end rRNA processing through protection of the mature 5'-end of the 15S rRNA and stabilization of mS47. The removal of the 5' precursor together with the dissociation of Ccm1 may be catalyzed by the 5'-3' exoribonuclease Pet127. Involved in the specific removal of group I introns in mitochondrial encoded transcripts. This is Mitochondrial 15S rRNA processing factor CCM1 (CCM1) from Candida albicans (strain SC5314 / ATCC MYA-2876) (Yeast).